Reading from the N-terminus, the 409-residue chain is Casein kinase II subunit alpha-1 (409 aa).

An N-terminal signal peptide occupies residues 1 to 35 (MIDTLFFLFFLFFDSPLRRLLLLCAVLALRAPTAH). Residue asparagine 72 is glycosylated (N-linked (GlcNAc...) asparagine). The Protein kinase domain maps to 110-395 (YEVVRKVGRG…AKEAMAHAYF (286 aa)). Residues 116–124 (VGRGKYSEV) and lysine 139 contribute to the ATP site. An N-linked (GlcNAc...) asparagine glycan is attached at asparagine 188. Catalysis depends on aspartate 227, which acts as the Proton acceptor.

It belongs to the protein kinase superfamily. Ser/Thr protein kinase family. CK2 subfamily. Heterotetramer of two catalytic alpha subunits and two regulatory beta subunits. Seems to be present in all plant organs. But seems to be less expressed than CKA2.

It is found in the nucleus. The protein resides in the nucleolus. It carries out the reaction L-seryl-[protein] + ATP = O-phospho-L-seryl-[protein] + ADP + H(+). The enzyme catalyses L-threonyl-[protein] + ATP = O-phospho-L-threonyl-[protein] + ADP + H(+). Inhibited by heparin. In terms of biological role, casein kinases are operationally defined by their preferential utilization of acidic proteins such as caseins as substrates. Phosphorylates casein in vitro. The alpha chain contains the catalytic site. The tetrameric holoenzyme CK2, composed of two alpha and two beta subunits, phosphorylates the transcription factor GBFl, resulting in stimulation of its DNA binding activity. CK2 phosphorylates the transcription factor PIF1 after an exposure to light, resulting in a proteasome-dependent degradation of PIF1 and promotion of photomorphogenesis. CK2 phosphorylates translation initiation factors. May participate in the regulation of the initiation of translation. Acts as a circadian clock component that maintains the correct period length through phosphorylation of CCA1. Required for the maintenance and control of genomic stability and chromatin structure. May act as an ectokinase that phosphorylates several extracellular proteins. The polypeptide is Casein kinase II subunit alpha-1 (Arabidopsis thaliana (Mouse-ear cress)).